Consider the following 107-residue polypeptide: Ferredoxin-6 (107 aa).

The 2Fe-2S ferredoxin-type domain occupies 2-106; sequence AKIIFIEHNG…GLVVHLPEKQ (105 aa). Cysteine 40, cysteine 46, cysteine 49, and cysteine 87 together coordinate [2Fe-2S] cluster.

It belongs to the adrenodoxin/putidaredoxin family. The cofactor is [2Fe-2S] cluster.

In terms of biological role, ferredoxins are small electron carrier proteins that participate in various redox reactions. FdVI is an essential protein required for growth of R.capsulatus. May be involved in Fe-S cluster assembly. This chain is Ferredoxin-6, found in Rhodobacter capsulatus (Rhodopseudomonas capsulata).